Here is a 669-residue protein sequence, read N- to C-terminus: Cysteine-rich receptor-like protein kinase 10 (669 aa).

Positions 1 to 34 (MRRNTDQESPIMSYYSSFFFLFLFSFLTSFRVSA) are cleaved as a signal peptide. The Extracellular portion of the chain corresponds to 35-285 (QDPTYVYHTC…PRSGKDGNSK (251 aa)). Gnk2-homologous domains are found at residues 38-142 (TYVY…NQNI) and 148-252 (TTGG…IYAF). N-linked (GlcNAc...) asparagine glycans are attached at residues Asn-49, Asn-53, Asn-71, and Asn-80. 2 cysteine pairs are disulfide-bonded: Cys-96–Cys-105 and Cys-108–Cys-133. Asn-114, Asn-159, Asn-185, and Asn-196 each carry an N-linked (GlcNAc...) asparagine glycan. 2 disulfide bridges follow: Cys-209–Cys-218 and Cys-221–Cys-243. The span at 260–274 (PPPPPPSISTPPVSA) shows a compositional bias: pro residues. Residues 260-280 (PPPPPPSISTPPVSAPPRSGK) are disordered. A helical transmembrane segment spans residues 286 to 306 (VLVIAIVVPIIVAVLLFIAGY). Over 307–669 (CFLTRRARKS…DASITDIHPR (363 aa)) the chain is Cytoplasmic. The Protein kinase domain maps to 348–634 (FVESNKIGQG…TLPVPRQPGL (287 aa)). Residues 354 to 362 (IGQGGFGEV) and Lys-376 contribute to the ATP site. Residue Tyr-421 is modified to Phosphotyrosine. The active-site Proton acceptor is the Asp-473. Ser-477 is modified (phosphoserine). Residue Thr-513 is modified to Phosphothreonine. Tyr-521 carries the post-translational modification Phosphotyrosine.

The protein belongs to the protein kinase superfamily. Ser/Thr protein kinase family. CRK subfamily. In terms of assembly, interacts with CRKIP1 (KAPP), CRKIP2 and CRKIP3, three kinase-associated type 2C proteins.

It localises to the membrane. The enzyme catalyses L-seryl-[protein] + ATP = O-phospho-L-seryl-[protein] + ADP + H(+). The catalysed reaction is L-threonyl-[protein] + ATP = O-phospho-L-threonyl-[protein] + ADP + H(+). This Arabidopsis thaliana (Mouse-ear cress) protein is Cysteine-rich receptor-like protein kinase 10 (CRK10).